Reading from the N-terminus, the 602-residue chain is Bifunctional ribose 1,5-bisphosphokinase-thymidine phosphorylase (602 aa).

Positions 1–187 are ribose 1,5-bisphosphokinase; sequence MKESGTFFLV…ALRNGANAGS (187 aa). Residues 188 to 602 form a thymidinephosphorylase region; sequence VPQPASRRHL…ASTAVRVDPD (415 aa).

The protein in the N-terminal section; belongs to the ribose 1,5-bisphosphokinase family. In the C-terminal section; belongs to the thymidine/pyrimidine-nucleoside phosphorylase family. Type 2 subfamily.

It carries out the reaction alpha-D-ribose 1,5-bisphosphate + ATP = 5-phospho-alpha-D-ribose 1-diphosphate + ADP. The catalysed reaction is thymidine + phosphate = 2-deoxy-alpha-D-ribose 1-phosphate + thymine. It functions in the pathway metabolic intermediate biosynthesis; 5-phospho-alpha-D-ribose 1-diphosphate biosynthesis; 5-phospho-alpha-D-ribose 1-diphosphate from D-ribose 5-phosphate (route II): step 3/3. In terms of biological role, catalyzes the phosphorylation of ribose 1,5-bisphosphate to 5-phospho-D-ribosyl alpha-1-diphosphate (PRPP). The protein is Bifunctional ribose 1,5-bisphosphokinase-thymidine phosphorylase (phnN) of Cupriavidus pinatubonensis (strain JMP 134 / LMG 1197) (Cupriavidus necator (strain JMP 134)).